Here is a 199-residue protein sequence, read N- to C-terminus: Imidazole glycerol phosphate synthase subunit HisH 2 (199 aa).

The Glutamine amidotransferase type-1 domain occupies 1 to 199 (MIAVIDVSGN…NNFLSLESKC (199 aa)). Catalysis depends on Cys-76, which acts as the Nucleophile. Active-site residues include His-177 and Glu-179.

In terms of assembly, heterodimer of HisH and HisF.

It localises to the cytoplasm. It carries out the reaction 5-[(5-phospho-1-deoxy-D-ribulos-1-ylimino)methylamino]-1-(5-phospho-beta-D-ribosyl)imidazole-4-carboxamide + L-glutamine = D-erythro-1-(imidazol-4-yl)glycerol 3-phosphate + 5-amino-1-(5-phospho-beta-D-ribosyl)imidazole-4-carboxamide + L-glutamate + H(+). The enzyme catalyses L-glutamine + H2O = L-glutamate + NH4(+). The protein operates within amino-acid biosynthesis; L-histidine biosynthesis; L-histidine from 5-phospho-alpha-D-ribose 1-diphosphate: step 5/9. Functionally, IGPS catalyzes the conversion of PRFAR and glutamine to IGP, AICAR and glutamate. The HisH subunit provides the glutamine amidotransferase activity that produces the ammonia necessary to HisF for the synthesis of IGP and AICAR. This is Imidazole glycerol phosphate synthase subunit HisH 2 from Legionella pneumophila (strain Lens).